The primary structure comprises 284 residues: Pantothenate synthetase (284 aa).

Residue 30-37 (MGNLHQGH) participates in ATP binding. The active-site Proton donor is His-37. Gln-61 is a (R)-pantoate binding site. Gln-61 lines the beta-alanine pocket. Residue 149 to 152 (GQKD) participates in ATP binding. Residue Gln-155 coordinates (R)-pantoate. Residues Val-178 and 186 to 189 (LSSR) contribute to the ATP site.

The protein belongs to the pantothenate synthetase family. As to quaternary structure, homodimer.

It is found in the cytoplasm. It carries out the reaction (R)-pantoate + beta-alanine + ATP = (R)-pantothenate + AMP + diphosphate + H(+). It participates in cofactor biosynthesis; (R)-pantothenate biosynthesis; (R)-pantothenate from (R)-pantoate and beta-alanine: step 1/1. Functionally, catalyzes the condensation of pantoate with beta-alanine in an ATP-dependent reaction via a pantoyl-adenylate intermediate. In Aeromonas salmonicida (strain A449), this protein is Pantothenate synthetase.